Here is a 210-residue protein sequence, read N- to C-terminus: ATP-dependent dethiobiotin synthetase BioD (210 aa).

Residue 13 to 18 (GIGKTV) coordinates ATP. Threonine 17 is a binding site for Mg(2+). Residue lysine 33 is part of the active site. Glutamate 101 contributes to the Mg(2+) binding site. Residues 101–104 (EGAG) and 185–187 (PWL) each bind ATP.

Belongs to the dethiobiotin synthetase family. Homodimer. The cofactor is Mg(2+).

Its subcellular location is the cytoplasm. It catalyses the reaction (7R,8S)-7,8-diammoniononanoate + CO2 + ATP = (4R,5S)-dethiobiotin + ADP + phosphate + 3 H(+). It functions in the pathway cofactor biosynthesis; biotin biosynthesis; biotin from 7,8-diaminononanoate: step 1/2. Catalyzes a mechanistically unusual reaction, the ATP-dependent insertion of CO2 between the N7 and N8 nitrogen atoms of 7,8-diaminopelargonic acid (DAPA, also called 7,8-diammoniononanoate) to form a ureido ring. This is ATP-dependent dethiobiotin synthetase BioD from Bradyrhizobium sp. (strain BTAi1 / ATCC BAA-1182).